Reading from the N-terminus, the 385-residue chain is MSEALPFPSNKTSTPECNLKTLYWACVHNDLAELQARLDAGVSPEEASQVDSNGRTGLMVACYHGFGSIVALLSCCPFLDVNQQDKDGNTALMLAAQAGHMSLVTLLLNYFAGLDLERRDQRGLTALMKAAIQDRSECVVALLMAGADLSSVDPVRGKTALEWAVLTDSFDTAQKIRQLLRRPQAEQLSLHYQPEWPALAQLVAQAQAQAQAPAAPSLLERLQATLSLSFAQSPQEGGVLDHLVTVTTSLASPFLSTACHTLCPDHPPKLGTRGKSVPELLGTAPPPPPEPHPPQQVPVPQVFAPNQSPQSMFSQWLQSRDSTRSQVPKILLSKAPSPSARYELTLRPQGQQSLAPPVWRFQERKKKEEETEPRGGGLGQAGGSK.

ANK repeat units lie at residues 17 to 46, 53 to 83, 87 to 116, 122 to 151, and 156 to 190; these read CNLKTLYWACVHNDLAELQARLDAGVSPEE, NGRTGLMVACYHGFGSIVALLSCCPFLDVNQ, DGNTALMLAAQAGHMSLVTLLLNYFAGLDL, RGLTALMKAAIQDRSECVVALLMAGADLSS, and RGKTALEWAVLTDSFDTAQKIRQLLRRPQAEQLSL. Positions 270–385 are disordered; the sequence is LGTRGKSVPE…GGLGQAGGSK (116 aa). Residues 284–297 show a composition bias toward pro residues; sequence APPPPPEPHPPQQV. The span at 304-326 shows a compositional bias: polar residues; that stretch reads APNQSPQSMFSQWLQSRDSTRSQ. The span at 361 to 373 shows a compositional bias: basic and acidic residues; that stretch reads FQERKKKEEETEP. Residues 374 to 385 show a composition bias toward gly residues; that stretch reads RGGGLGQAGGSK.

As to expression, isoform 1: Expressed predominantly in the retina. Isoform 2: Expressed in the pineal gland.

The protein localises to the cytoplasm. It localises to the cytosol. It is found in the nucleus. Acts as a transcriptional repressor for CRX-activated photoreceptor gene regulation. The protein is Photoreceptor ankyrin repeat protein of Mus musculus (Mouse).